The primary structure comprises 387 residues: Probable peptidoglycan glycosyltransferase FtsW (387 aa).

9 helical membrane passes run 19 to 39 (LDFS…VMVA), 61 to 81 (ITFL…PMSV), 86 to 106 (SGLL…PGIG), 118 to 138 (LGPF…VYFA), 161 to 181 (VLLI…SVVI), 199 to 219 (FLLL…ASPY), 286 to 306 (FIGA…LVIL), 320 to 340 (YVVF…MGVA), and 352 to 372 (PFIS…ALVF).

The protein belongs to the SEDS family. FtsW subfamily.

The protein localises to the cell inner membrane. The catalysed reaction is [GlcNAc-(1-&gt;4)-Mur2Ac(oyl-L-Ala-gamma-D-Glu-L-Lys-D-Ala-D-Ala)](n)-di-trans,octa-cis-undecaprenyl diphosphate + beta-D-GlcNAc-(1-&gt;4)-Mur2Ac(oyl-L-Ala-gamma-D-Glu-L-Lys-D-Ala-D-Ala)-di-trans,octa-cis-undecaprenyl diphosphate = [GlcNAc-(1-&gt;4)-Mur2Ac(oyl-L-Ala-gamma-D-Glu-L-Lys-D-Ala-D-Ala)](n+1)-di-trans,octa-cis-undecaprenyl diphosphate + di-trans,octa-cis-undecaprenyl diphosphate + H(+). Its pathway is cell wall biogenesis; peptidoglycan biosynthesis. Its function is as follows. Peptidoglycan polymerase that is essential for cell division. The polypeptide is Probable peptidoglycan glycosyltransferase FtsW (Saccharophagus degradans (strain 2-40 / ATCC 43961 / DSM 17024)).